The sequence spans 306 residues: Ornithine carbamoyltransferase (306 aa).

Carbamoyl phosphate-binding positions include 53–56 (STRT), Gln80, Arg104, and 131–134 (HPCQ). L-ornithine is bound by residues Asn162, Asp219, and 223–224 (SM). Carbamoyl phosphate contacts are provided by residues 259–260 (CL) and Arg287.

The protein belongs to the aspartate/ornithine carbamoyltransferase superfamily. OTCase family.

It localises to the cytoplasm. The enzyme catalyses carbamoyl phosphate + L-ornithine = L-citrulline + phosphate + H(+). It functions in the pathway amino-acid biosynthesis; L-arginine biosynthesis; L-arginine from L-ornithine and carbamoyl phosphate: step 1/3. Reversibly catalyzes the transfer of the carbamoyl group from carbamoyl phosphate (CP) to the N(epsilon) atom of ornithine (ORN) to produce L-citrulline. This is Ornithine carbamoyltransferase from Acinetobacter baumannii (strain ATCC 17978 / DSM 105126 / CIP 53.77 / LMG 1025 / NCDC KC755 / 5377).